The following is a 268-amino-acid chain: Interleukin-1 beta (268 aa).

Positions 1-116 (MATVPELNCE…WDDDDLLVCD (116 aa)) are excised as a propeptide.

The protein belongs to the IL-1 family. As to quaternary structure, monomer. In its precursor form, weakly interacts with full-length MEFV; the mature cytokine does not interact at all. Interacts with integrins ITGAV:ITGBV and ITGA5:ITGB1; integrin-binding is required for IL1B signaling. Interacts with cargo receptor TMED10; the interaction is direct and is required for the secretion of IL1B mature form. Interacts with HSP90AB1; the interaction facilitates cargo translocation into the ERGIC. Interacts with HSP90B1; the interaction facilitates cargo translocation into the ERGIC.

The protein resides in the cytoplasm. Its subcellular location is the cytosol. It is found in the secreted. The protein localises to the lysosome. It localises to the extracellular exosome. Potent pro-inflammatory cytokine. Initially discovered as the major endogenous pyrogen, induces prostaglandin synthesis, neutrophil influx and activation, T-cell activation and cytokine production, B-cell activation and antibody production, and fibroblast proliferation and collagen production. Promotes Th17 differentiation of T-cells. Synergizes with IL12/interleukin-12 to induce IFNG synthesis from T-helper 1 (Th1) cells. Plays a role in angiogenesis by inducing VEGF production synergistically with TNF and IL6. Involved in transduction of inflammation downstream of pyroptosis: its mature form is specifically released in the extracellular milieu by passing through the gasdermin-D (GSDMD) pore. In Rattus norvegicus (Rat), this protein is Interleukin-1 beta.